Reading from the N-terminus, the 252-residue chain is GTP cyclohydrolase 1 type 2 homolog (252 aa).

A divalent metal cation contacts are provided by His63, His64, Asp101, His220, and Glu224.

This sequence belongs to the GTP cyclohydrolase I type 2/NIF3 family. In terms of assembly, homohexamer.

This chain is GTP cyclohydrolase 1 type 2 homolog, found in Vibrio cholerae serotype O1 (strain ATCC 39315 / El Tor Inaba N16961).